The primary structure comprises 149 residues: Large ribosomal subunit protein uL13 (149 aa).

It belongs to the universal ribosomal protein uL13 family. In terms of assembly, part of the 50S ribosomal subunit.

In terms of biological role, this protein is one of the early assembly proteins of the 50S ribosomal subunit, although it is not seen to bind rRNA by itself. It is important during the early stages of 50S assembly. The chain is Large ribosomal subunit protein uL13 from Chlorobium limicola (strain DSM 245 / NBRC 103803 / 6330).